Consider the following 797-residue polypeptide: Plakophilin-3 (797 aa).

The disordered stretch occupies residues 58–81 (GQQSRHNGSAELDGSAESARGMPR). Residue R81 is modified to Omega-N-methylarginine. Residues S123, S180, and S183 each carry the phosphoserine modification. Phosphotyrosine is present on Y195. A compositionally biased stretch (low complexity) spans 219-228 (ASSGSSRAGG). Residues 219–241 (ASSGSSRAGGLDWPEATEGPPSR) form a disordered region. Position 240 is a phosphoserine (S240). Phosphothreonine is present on T250. The segment at 253-274 (RFQSSHRSRGGTGSVSGAGLEP) is disordered. At R261 the chain carries Omega-N-methylarginine. Residues 283–288 (SLSLSL) are required for interaction with SFN. A phosphoserine mark is found at S285, S313, S314, and S331. The tract at residues 294 to 724 (LPDVRGLDSY…AEVLVNIIAV (431 aa)) is required for interaction with GSK3B. 8 ARM repeats span residues 305-348 (GHRT…HRCY), 351-390 (AAAK…NLIY), 393-432 (VDNK…NLSS), 449-487 (TDLV…NLSS), 491-536 (ATRQ…NLSY), 596-637 (PKGL…NITA), 645-684 (VLSR…NLSR), and 689-730 (KDEM…NLVV). The segment at 516–797 (VGKCEDKSVE…GYRKEDFLGP (282 aa)) is required for binding to PKP2 mRNA.

The protein belongs to the beta-catenin family. As to quaternary structure, found in a complex composed of CDH1, RAP1A and PKP3; PKP3 acts as a scaffold protein within the complex, the complex is required for CDH1 localization to mature desmosome cell junctions. Interacts with FXR1; the interaction facilitates the binding of PKP3 to PKP2 mRNA. Interacts (via ARM repeats) with GSK3B; the interaction may be involved in PKP3 protein degradation. Interacts with hyperphosphorylated and hypophosphorylated RB1; the interaction inhibits RB1 interaction with and repression of the transcription factor E2F1, potentially via sequestering RB1 to the cytoplasm. Interacts with CDKN1A; the interaction sequesters CDKN1A to the cytoplasm thereby repressing its role as an inhibitor of CDK4- and CDK6-driven RB1 phosphorylation. Interacts (via N-terminus) with SFN; the interaction maintains the cytoplasmic pool of PKP3, facilitates PKP3 exchange at desmosomes and restricts PKP3 localization to existing desmosome cell junctions. Interacts (via N-terminus) with JUP; the interaction is required for PKP3 localization to desmosome cell-cell junctions. In terms of processing, phosphorylated at Ser-285 when localized to the cytoplasm, PKP3 at desmosome cell junctions is not phosphorylated. Phosphorylation at Try-195 by SRC is induced by reactive oxygen species and potentially acts as a release mechanism from desmosome cell-cell junctions. As to expression, expressed in all layers of the epidermis, but is most abundant in the basal layer (at protein level). Expressed in keratinocytes of the epidermis at birth (at protein level). Expressed in the anagen non-keratinized inner root sheath cuticle and hair cuticle (at protein level). Also expressed in the matrix, precursors of the inner root sheath and hair shaft lineages (at protein level). Expressed at apical membranes in the outer hair root sheath and basal layer keratinocytes (at protein level). Expressed in intestinal epithelial cells and lamina propria of the ileum (at protein level). Expressed in keratinocytes (at protein level).

The protein resides in the nucleus. The protein localises to the cell junction. It localises to the desmosome. Its subcellular location is the cytoplasm. It is found in the cell membrane. The protein resides in the adherens junction. A component of desmosome cell-cell junctions which are required for positive regulation of cellular adhesion. Required for the localization of DSG2, DSP and PKP2 to mature desmosome junctions. May also play a role in the maintenance of DSG3 protein abundance in keratinocytes. Required for the formation of DSP-containing desmosome precursors in the cytoplasm during desmosome assembly. Also regulates the accumulation of CDH1 to mature desmosome junctions, via cAMP-dependent signaling and its interaction with activated RAP1A. Positively regulates the stabilization of PKP2 mRNA and therefore protein abundance, via its interaction with FXR1, may also regulate the protein abundance of DSP via the same mechanism. May also regulate the protein abundance of the desmosome component PKP1. Required for the organization of desmosome junctions at intercellular borders between basal keratinocytes of the epidermis, as a result plays a role in maintenance of the dermal barrier and regulation of the dermal inflammatory response. Required during epidermal keratinocyte differentiation for cell adherence at tricellular cell-cell contacts, via regulation of the timely formation of adherens junctions and desmosomes in a calcium-dependent manner, and may also play a role in the organization of the intracellular actin fiber belt. Acts as a negative regulator of the inflammatory response in hematopoietic cells of the skin and intestine, via modulation of proinflammatory cytokine production. Important for epithelial barrier maintenance in the intestine to reduce intestinal permeability, thereby plays a role in protection from intestinal-derived endotoxemia. Required for the development of hair follicles, via a role in the regulation of inner root sheaf length, correct alignment and anterior-posterior polarity of hair follicles. Promotes proliferation and cell-cycle G1/S phase transition of keratinocytes. Promotes E2F1-driven transcription of G1/S phase promoting genes by acting to release E2F1 from its inhibitory interaction with RB1, via sequestering RB1 and CDKN1A to the cytoplasm and thereby increasing CDK4- and CDK6-driven phosphorylation of RB1. May act as a scaffold protein to facilitate MAPK phosphorylation of RPS6KA protein family members and subsequently promote downstream EGFR signaling. May play a role in the positive regulation of transcription of Wnt-mediated TCF-responsive target genes. This chain is Plakophilin-3 (Pkp3), found in Mus musculus (Mouse).